We begin with the raw amino-acid sequence, 3068 residues long: Highly reducing polyketide synthase 17 (3068 aa).

The Ketosynthase family 3 (KS3) domain maps to 100 to 526 (IEPIAIVGAS…GTNAHAIMER (427 aa)). Catalysis depends on for beta-ketoacyl synthase activity residues C274, H410, and H449. Residues 627–938 (YVFTGQGAQW…LAGPIRQCLA (312 aa)) are malonyl-CoA:ACP transacylase (MAT) domain. S721 serves as the catalytic For malonyltransferase activity. The segment at 1027-1160 (HHLLGVRMTE…GVVEGVMTLD (134 aa)) is N-terminal hotdog fold. The tract at residues 1027–1311 (HHLLGVRMTE…RASNIDMTIV (285 aa)) is dehydratase (DH) domain. Positions 1027–1334 (HHLLGVRMTE…SRSLAAHVDG (308 aa)) constitute a PKS/mFAS DH domain. The active-site Proton acceptor; for dehydratase activity is the H1059. A C-terminal hotdog fold region spans residues 1179 to 1334 (NRTMVIPEEL…SRSLAAHVDG (156 aa)). The active-site Proton donor; for dehydratase activity is D1247. The segment at 1735 to 2037 (LGPVQSSKGD…LVRQGGKVIL (303 aa)) is enoylreductase (ER) domain. The tract at residues 2062-2240 (AAYVVAGGMG…FLSMNIGWIE (179 aa)) is catalytic ketoreductase (KR) domain. In terms of domain architecture, Carrier spans 2345–2423 (TIIDFISSAI…DLAEKVASRS (79 aa)). S2383 bears the O-(pantetheine 4'-phosphoryl)serine mark. Positions 2831 to 3062 (FDVASLGLRS…SCMITSLLED (232 aa)) are choline/carnitine acyltransferase (cAT) domain.

The protein operates within secondary metabolite biosynthesis. Highly reducing polyketide synthase; part of the gene cluster that mediates the biosynthesis of (2Z,4E,6E,10E)-9-hydroxydodeca-2,4,6,10-tetraenoic acid (BAA), (2E,4E,6E,10E)-9-hydroxydodeca-2,4,6,10-tetraenoic acid (BAB), and (2Z,4E,6E)-octa-2,4,6-trienedioic acid (PBA). The highly reducing polyketide synthase Ba17a is sufficent to produce PBA and BAA. The still to be characterized protein Ba17b leads to an increased production of BAA as well as to the production of the new compound BAB. BAA does not possess insecticidal activity against G.mellonella larvae, however, both BAA and BAB increase the growth of Candida albicans and BAA can mitigate the fungicidal effects of fluconazole over C.albicans, suggesting that generalist pathogens such as M.anisopliae, can potentially manipulate the yeast microbiota found in arthropods (and anywhere else) by the activity of compounds as BAA and BAB. The chain is Highly reducing polyketide synthase 17 from Metarhizium anisopliae (Entomophthora anisopliae).